A 673-amino-acid chain; its full sequence is MTNYLLEIGLEEIPAHLVTPSINQLAERMETFLKENRLEFDKIIKFSTPRRLAIIVEGLAEASEAIDEEVKGPSAKIAKDAQGNWSKAIQGFSRGQGATPDDLILKGDYYYAKKHIDGVKAEEILSKVGDEVIAKMTFSTYMKWGNNDFLFVRPIQWIVSLLEDKVVAFDLLDVTANRFSRGHRFLANVEVELKNANDYASKMPENFVLVDAEHRKAEISAQILALASENKWQVTLHKDLLEEVNNIVEYPTAFVGSFDPKYLSVPAEVLVTSMRDNQRYFEVYNQEGQLAPNFISVRNGNAENIENVVLGNEKVLVARLEDAEFFWKEDQKLKIEDLVAKLAKVTFHAKIGSITEHMARTKEIAAKLADIAGLTDEEKRDVARSAEIYKFDLLTGMVGEFDELQGVMGEKYALLAGENANVSAAIREHYMPTSAEGELPETKVGSVLAAADKIDSVLSFFNVGLIPSGSNDPYALRRAVQGLIRIIEKMNWHFDLSLFIDQFEGENHLEILDFVKARIQKLLLEKLDRHDIVEAAINSSNFDITNMMESAFVIDGHKLHEPFKPAIENVSRSINLVKKAKDIKEINPTLFEEDAEEALYNVVISLQNQWTYMPGEEKFRAIVHSLAPAIETFFESVMVMAEDLSVRDNRIALLSEVVALTSVMADFSLINTK.

Belongs to the class-II aminoacyl-tRNA synthetase family. As to quaternary structure, tetramer of two alpha and two beta subunits.

The protein localises to the cytoplasm. It catalyses the reaction tRNA(Gly) + glycine + ATP = glycyl-tRNA(Gly) + AMP + diphosphate. This is Glycine--tRNA ligase beta subunit from Lactococcus lactis subsp. lactis (strain IL1403) (Streptococcus lactis).